We begin with the raw amino-acid sequence, 100 residues long: Small ribosomal subunit protein uS14c (100 aa).

The protein belongs to the universal ribosomal protein uS14 family. As to quaternary structure, part of the 30S ribosomal subunit.

The protein localises to the plastid. Its subcellular location is the chloroplast. Its function is as follows. Binds 16S rRNA, required for the assembly of 30S particles. In Oenothera argillicola (Appalachian evening primrose), this protein is Small ribosomal subunit protein uS14c.